We begin with the raw amino-acid sequence, 631 residues long: Origin recognition complex subunit 1 (631 aa).

Low complexity-rich tracts occupy residues 1 to 14 (MTDE…YPPI) and 22 to 37 (KLNN…NNNH). The disordered stretch occupies residues 1-164 (MTDESSSSIS…EEEDEEGKFN (164 aa)). The segment covering 55–80 (DNEKIGFSDPENEKINKHKASFKDSN) has biased composition (basic and acidic residues). The span at 91-104 (EDTDDDDYEDEDED) shows a compositional bias: acidic residues. The span at 105 to 133 (ENHKIKDESDNSEDFNNHTKNTTDLDEGF) shows a compositional bias: basic and acidic residues. The span at 141–160 (ESEEEEEEEEYEEEEEEDEE) shows a compositional bias: acidic residues. ATP is bound by residues Val230 and 265–273 (GMPGTGKTA). Mg(2+) is bound by residues Asp361 and Glu362. Positions 362, 395, and 460 each coordinate ATP.

It belongs to the ORC1 family. As to quaternary structure, ORC is composed of six subunits.

It localises to the nucleus. Component of the origin recognition complex (ORC) that binds origins of replication. DNA-binding is ATP-dependent, however specific DNA sequences that define origins of replication have not been identified so far. ORC is required to assemble the pre-replication complex necessary to initiate DNA replication. In Dictyostelium discoideum (Social amoeba), this protein is Origin recognition complex subunit 1 (orcA).